Reading from the N-terminus, the 588-residue chain is Arginine--tRNA ligase (588 aa).

The 'HIGH' region motif lies at 129 to 139; that stretch reads PNIAKEMHVGH.

Belongs to the class-I aminoacyl-tRNA synthetase family. Monomer.

The protein resides in the cytoplasm. The catalysed reaction is tRNA(Arg) + L-arginine + ATP = L-arginyl-tRNA(Arg) + AMP + diphosphate. The protein is Arginine--tRNA ligase of Frankia casuarinae (strain DSM 45818 / CECT 9043 / HFP020203 / CcI3).